The primary structure comprises 289 residues: Diaminopimelate epimerase (289 aa).

Residues N17, Q47, and N67 each contribute to the substrate site. Catalysis depends on C76, which acts as the Proton donor. Substrate contacts are provided by residues 77-78 (GN), N164, N198, and 216-217 (ER). The Proton acceptor role is filled by C225. Residue 226 to 227 (GS) participates in substrate binding.

The protein belongs to the diaminopimelate epimerase family. Homodimer.

The protein localises to the cytoplasm. It carries out the reaction (2S,6S)-2,6-diaminopimelate = meso-2,6-diaminopimelate. Its pathway is amino-acid biosynthesis; L-lysine biosynthesis via DAP pathway; DL-2,6-diaminopimelate from LL-2,6-diaminopimelate: step 1/1. Catalyzes the stereoinversion of LL-2,6-diaminopimelate (L,L-DAP) to meso-diaminopimelate (meso-DAP), a precursor of L-lysine and an essential component of the bacterial peptidoglycan. The chain is Diaminopimelate epimerase from Bradyrhizobium sp. (strain BTAi1 / ATCC BAA-1182).